We begin with the raw amino-acid sequence, 330 residues long: MSHIIKIFPSNIEFSGREDESILDAALSAGIHLEHSCKAGDCGICESDLLAGEVVDSKGNIFGQGDKILTCCCKPKTALELNAHFFPELAGQTKKIVPCKVNSAVLVSGDVMTLKLRTPPTAKIGFLPGQYINLHYKGVTRSYSIANSDESNGIELHVRNVPNGQMSSLIFGELQENTLMRIEGPCGTFFIRESDRPIIFLAGGTGFAPVKSMVEHLIQGKCRREIYIYWGMQYSKDFYSALPQQWSEQHDNVHYIPVVSGDDAEWGGRKGFVHHAVMDDFDSLEFFDIYACGSPVMIDASKKDFMMKNLSVEHFYSDAFTASNNIEDNL.

Residues 3-89 enclose the 2Fe-2S ferredoxin-type domain; it reads HIIKIFPSNI…ELNAHFFPEL (87 aa). The [2Fe-2S] cluster site is built by Cys-37, Cys-42, and Cys-45. The FAD-binding FR-type domain occupies 94 to 192; that stretch reads KKIVPCKVNS…EGPCGTFFIR (99 aa).

It depends on [2Fe-2S] cluster as a cofactor.

Its pathway is bacterial outer membrane biogenesis; LPS O-antigen biosynthesis. This Salmonella typhimurium (strain LT2 / SGSC1412 / ATCC 700720) protein is Protein RfbI (rfbI).